Reading from the N-terminus, the 115-residue chain is Superoxide reductase (115 aa).

Positions 14, 16, 41, 47, 102, and 105 each coordinate Fe cation.

It belongs to the desulfoferrodoxin family. In terms of assembly, homotetramer. Fe cation is required as a cofactor.

The enzyme catalyses reduced [rubredoxin] + superoxide + 2 H(+) = oxidized [rubredoxin] + H2O2. Uses electrons from reduced NADP, by way of rubredoxin and an oxidoreductase, to catalyze the reduction of superoxide to hydrogen peroxide. This is Superoxide reductase (sorA) from Pyrococcus abyssi (strain GE5 / Orsay).